Consider the following 395-residue polypeptide: Tyrosine--tRNA ligase 2 (395 aa).

Positions 42–51 (PTAPDIHLGH) match the 'HIGH' region motif. A 'KMSKS' region motif is present at residues 226 to 230 (KMSKS). Lysine 229 contacts ATP. The 61-residue stretch at 334–394 (IAISNLLKEA…GKRKFARVTI (61 aa)) folds into the S4 RNA-binding domain.

This sequence belongs to the class-I aminoacyl-tRNA synthetase family. TyrS type 2 subfamily. In terms of assembly, homodimer.

It is found in the cytoplasm. The catalysed reaction is tRNA(Tyr) + L-tyrosine + ATP = L-tyrosyl-tRNA(Tyr) + AMP + diphosphate + H(+). Catalyzes the attachment of tyrosine to tRNA(Tyr) in a two-step reaction: tyrosine is first activated by ATP to form Tyr-AMP and then transferred to the acceptor end of tRNA(Tyr). The protein is Tyrosine--tRNA ligase 2 of Vibrio cholerae serotype O1 (strain ATCC 39315 / El Tor Inaba N16961).